We begin with the raw amino-acid sequence, 79 residues long: uncharacterized protein (79 aa).

This is an uncharacterized protein from Methanocaldococcus jannaschii (strain ATCC 43067 / DSM 2661 / JAL-1 / JCM 10045 / NBRC 100440) (Methanococcus jannaschii).